The following is a 140-amino-acid chain: Nucleoside diphosphate kinase (140 aa).

Lys-11, Phe-59, Arg-87, Thr-93, Arg-104, and Asn-114 together coordinate ATP. The active-site Pros-phosphohistidine intermediate is the His-117.

Belongs to the NDK family. Homotetramer. Mg(2+) is required as a cofactor.

It localises to the cytoplasm. It catalyses the reaction a 2'-deoxyribonucleoside 5'-diphosphate + ATP = a 2'-deoxyribonucleoside 5'-triphosphate + ADP. The enzyme catalyses a ribonucleoside 5'-diphosphate + ATP = a ribonucleoside 5'-triphosphate + ADP. Functionally, major role in the synthesis of nucleoside triphosphates other than ATP. The ATP gamma phosphate is transferred to the NDP beta phosphate via a ping-pong mechanism, using a phosphorylated active-site intermediate. The protein is Nucleoside diphosphate kinase of Novosphingobium aromaticivorans (strain ATCC 700278 / DSM 12444 / CCUG 56034 / CIP 105152 / NBRC 16084 / F199).